Here is a 28-residue protein sequence, read N- to C-terminus: NLQYLKNMIKCTNTRHWLSFTNYGCYCG.

This sequence belongs to the phospholipase A2 family. Group I subfamily. Requires Ca(2+) as cofactor. As to expression, expressed by the venom gland.

It localises to the secreted. It catalyses the reaction a 1,2-diacyl-sn-glycero-3-phosphocholine + H2O = a 1-acyl-sn-glycero-3-phosphocholine + a fatty acid + H(+). Snake venom phospholipase A2 (PLA2) that inhibits neuromuscular transmission by blocking acetylcholine release from the nerve termini. PLA2 catalyzes the calcium-dependent hydrolysis of the 2-acyl groups in 3-sn-phosphoglycerides. In Micrurus nigrocinctus (Central American coral snake), this protein is Phospholipase A2 2.